A 285-amino-acid polypeptide reads, in one-letter code: Inositol monophosphatase 1 (285 aa).

Glu73, Asp93, Ile95, and Asp96 together coordinate Mg(2+). Glu73 provides a ligand contact to substrate. Substrate-binding positions include 95–98 (IDGT), 198–200 (GTA), Glu217, and Asp224. Asp224 provides a ligand contact to Mg(2+).

Belongs to the inositol monophosphatase superfamily. In terms of assembly, homodimer. It depends on Mg(2+) as a cofactor.

The protein resides in the cytoplasm. The enzyme catalyses a myo-inositol phosphate + H2O = myo-inositol + phosphate. It carries out the reaction 1D-myo-inositol 1-phosphate + H2O = myo-inositol + phosphate. The catalysed reaction is 1D-myo-inositol 2-phosphate + H2O = myo-inositol + phosphate. It catalyses the reaction 1D-myo-inositol 3-phosphate + H2O = myo-inositol + phosphate. The enzyme catalyses 1D-myo-inositol 4-phosphate + H2O = myo-inositol + phosphate. It carries out the reaction 1D-myo-inositol 5-phosphate + H2O = myo-inositol + phosphate. The catalysed reaction is 1D-myo-inositol 6-phosphate + H2O = myo-inositol + phosphate. It catalyses the reaction scyllo-inositol 1-phosphate + H2O = scyllo-inositol + phosphate. The enzyme catalyses alpha-D-galactose 1-phosphate + H2O = D-galactose + phosphate. It carries out the reaction alpha-D-glucose 1-phosphate + H2O = D-glucose + phosphate. The catalysed reaction is D-glucose 6-phosphate + H2O = D-glucose + phosphate. It catalyses the reaction beta-D-fructose 1-phosphate + H2O = D-fructose + phosphate. The enzyme catalyses glycerol 2-phosphate + H2O = glycerol + phosphate. It carries out the reaction adenosine 2'-phosphate + H2O = adenosine + phosphate. It functions in the pathway polyol metabolism; myo-inositol biosynthesis; myo-inositol from D-glucose 6-phosphate: step 2/2. Inhibited by Li(+), Ca(2+) and Mn(2+), but also by Mg(2+) at concentrations above 3 mM. In terms of biological role, phosphatase involved in the dephosphorylation of myo-inositol monophosphate to generate myo-inositol. Is also able to dephosphorylate scyllo-inositol-phosphate, myo-inositol 1,4-diphosphate, scyllo-inositol-1,3-diphosphate and scyllo-inositol-1,4-diphosphate. Also dephosphorylates in vitro other sugar-phosphates including D-galactose-1-phosphate, glucose-1-phosphate, glucose-6-phosphate, fructose-1-phosphate, beta-glycerophosphate and 2'-AMP. Responsible for the provision of inositol required for synthesis of phosphatidylinositol and polyphosphoinositides, and involved in maintaining normal brain function. Has been implicated as the pharmacological target for lithium Li(+) action in brain. In Xenopus laevis (African clawed frog), this protein is Inositol monophosphatase 1 (impa1).